Consider the following 202-residue polypeptide: Small ribosomal subunit protein uS4c (202 aa).

Over residues 1–13 (MSRYRGPRMKMIR) the composition is skewed to basic residues. The disordered stretch occupies residues 1 to 41 (MSRYRGPRMKMIRRPGTLPGLTSKTPGTKVGSSDRSTSSKK). A compositionally biased stretch (low complexity) spans 29–41 (KVGSSDRSTSSKK). One can recognise an S4 RNA-binding domain in the interval 90 to 153 (MRLDNTIFRL…KCRLVDRRDM (64 aa)).

This sequence belongs to the universal ribosomal protein uS4 family. Part of the 30S ribosomal subunit. Contacts protein S5. The interaction surface between S4 and S5 is involved in control of translational fidelity.

The protein resides in the plastid. In terms of biological role, one of the primary rRNA binding proteins, it binds directly to 16S rRNA where it nucleates assembly of the body of the 30S subunit. With S5 and S12 plays an important role in translational accuracy. This is Small ribosomal subunit protein uS4c (rps4) from Aneura mirabilis (Parasitic liverwort).